The primary structure comprises 209 residues: Kynurenine formamidase (209 aa).

Residue Trp-19 participates in substrate binding. Residues His-49, His-53, and Asp-55 each contribute to the Zn(2+) site. The active-site Proton donor/acceptor is the His-59. Residues His-160 and Glu-172 each contribute to the Zn(2+) site.

Belongs to the Cyclase 1 superfamily. KynB family. Homodimer. Zn(2+) is required as a cofactor.

The enzyme catalyses N-formyl-L-kynurenine + H2O = L-kynurenine + formate + H(+). It functions in the pathway amino-acid degradation; L-tryptophan degradation via kynurenine pathway; L-kynurenine from L-tryptophan: step 2/2. Catalyzes the hydrolysis of N-formyl-L-kynurenine to L-kynurenine, the second step in the kynurenine pathway of tryptophan degradation. The chain is Kynurenine formamidase from Geobacillus thermodenitrificans (strain NG80-2).